Here is a 212-residue protein sequence, read N- to C-terminus: Glycerol-3-phosphate acyltransferase (212 aa).

A run of 6 helical transmembrane segments spans residues I6–L26, L56–H76, L92–F112, L122–L142, S150–A170, and S171–W191.

Belongs to the PlsY family. As to quaternary structure, probably interacts with PlsX.

The protein resides in the cell inner membrane. The catalysed reaction is an acyl phosphate + sn-glycerol 3-phosphate = a 1-acyl-sn-glycero-3-phosphate + phosphate. The protein operates within lipid metabolism; phospholipid metabolism. Functionally, catalyzes the transfer of an acyl group from acyl-phosphate (acyl-PO(4)) to glycerol-3-phosphate (G3P) to form lysophosphatidic acid (LPA). This enzyme utilizes acyl-phosphate as fatty acyl donor, but not acyl-CoA or acyl-ACP. The chain is Glycerol-3-phosphate acyltransferase from Zymomonas mobilis subsp. mobilis (strain ATCC 31821 / ZM4 / CP4).